The following is a 597-amino-acid chain: Elongation factor 4 (597 aa).

The tr-type G domain occupies 2–184 (KHIRNFSIIA…TIVKCIPAPE (183 aa)). Residues 14–19 (DHGKST) and 131–134 (NKID) contribute to the GTP site.

This sequence belongs to the TRAFAC class translation factor GTPase superfamily. Classic translation factor GTPase family. LepA subfamily.

It localises to the cell inner membrane. The catalysed reaction is GTP + H2O = GDP + phosphate + H(+). Its function is as follows. Required for accurate and efficient protein synthesis under certain stress conditions. May act as a fidelity factor of the translation reaction, by catalyzing a one-codon backward translocation of tRNAs on improperly translocated ribosomes. Back-translocation proceeds from a post-translocation (POST) complex to a pre-translocation (PRE) complex, thus giving elongation factor G a second chance to translocate the tRNAs correctly. Binds to ribosomes in a GTP-dependent manner. This Aliivibrio salmonicida (strain LFI1238) (Vibrio salmonicida (strain LFI1238)) protein is Elongation factor 4.